An 828-amino-acid chain; its full sequence is Periplasmic nitrate reductase (828 aa).

The segment at residues 1 to 32 (MNLSRRDFMKANAAMAAATAAGLSIPVKNVEA) is a signal peptide (tat-type signal). Residues 37–93 (IKWDKAVCRFCGTGCAVLVGTKDGRVVASQGDPDAEVNRGLNCIKGYFLPKIMYGKD) enclose the 4Fe-4S Mo/W bis-MGD-type domain. [4Fe-4S] cluster-binding residues include Cys-44, Cys-47, Cys-51, and Cys-79. Mo-bis(molybdopterin guanine dinucleotide) contacts are provided by residues Lys-81, Gln-148, Asn-173, Cys-177, 210-217 (WGSNMAEM), 241-245 (STFEH), Met-371, Gln-375, Asn-481, 507-508 (SD), Lys-530, Asp-557, and 717-726 (TGRVLEHWHT). Residue Phe-793 coordinates substrate. 2 residues coordinate Mo-bis(molybdopterin guanine dinucleotide): Asn-801 and Lys-818.

It belongs to the prokaryotic molybdopterin-containing oxidoreductase family. NasA/NapA/NarB subfamily. In terms of assembly, component of the periplasmic nitrate reductase NapAB complex composed of NapA and NapB. It depends on [4Fe-4S] cluster as a cofactor. The cofactor is Mo-bis(molybdopterin guanine dinucleotide). Post-translationally, predicted to be exported by the Tat system. The position of the signal peptide cleavage has not been experimentally proven.

The protein resides in the periplasm. It catalyses the reaction 2 Fe(II)-[cytochrome] + nitrate + 2 H(+) = 2 Fe(III)-[cytochrome] + nitrite + H2O. Catalytic subunit of the periplasmic nitrate reductase complex NapAB. Receives electrons from NapB and catalyzes the reduction of nitrate to nitrite. This chain is Periplasmic nitrate reductase, found in Aggregatibacter actinomycetemcomitans (Actinobacillus actinomycetemcomitans).